The sequence spans 24 residues: FLPMLAGLAASMVPKFVCLITKKC.

Cys-18 and Cys-24 are oxidised to a cystine.

Expressed by the skin glands.

Its subcellular location is the secreted. Functionally, antibacterial activity against Gram-positive bacterium S.aureus and Gram-negative bacterium E.coli. The chain is Brevinin-1Lb from Rana luteiventris (Columbia spotted frog).